The sequence spans 165 residues: NADPH-dependent 7-cyano-7-deazaguanine reductase (165 aa).

The active-site Thioimide intermediate is the C56. D63 (proton donor) is an active-site residue. Residues 78–80 (VES) and 97–98 (HE) contribute to the substrate site.

The protein belongs to the GTP cyclohydrolase I family. QueF type 1 subfamily.

It localises to the cytoplasm. It catalyses the reaction 7-aminomethyl-7-carbaguanine + 2 NADP(+) = 7-cyano-7-deazaguanine + 2 NADPH + 3 H(+). Its pathway is tRNA modification; tRNA-queuosine biosynthesis. Its function is as follows. Catalyzes the NADPH-dependent reduction of 7-cyano-7-deazaguanine (preQ0) to 7-aminomethyl-7-deazaguanine (preQ1). The polypeptide is NADPH-dependent 7-cyano-7-deazaguanine reductase (Bacillus thuringiensis subsp. konkukian (strain 97-27)).